The following is a 214-amino-acid chain: Imidazole glycerol phosphate synthase subunit HisH 2 (214 aa).

The region spanning 2 to 210 (KIVIIDYDMG…LDWVKIQKLG (209 aa)) is the Glutamine amidotransferase type-1 domain. C82 serves as the catalytic Nucleophile. Residues H185 and E187 contribute to the active site.

Heterodimer of HisH and HisF.

The protein localises to the cytoplasm. The catalysed reaction is 5-[(5-phospho-1-deoxy-D-ribulos-1-ylimino)methylamino]-1-(5-phospho-beta-D-ribosyl)imidazole-4-carboxamide + L-glutamine = D-erythro-1-(imidazol-4-yl)glycerol 3-phosphate + 5-amino-1-(5-phospho-beta-D-ribosyl)imidazole-4-carboxamide + L-glutamate + H(+). It catalyses the reaction L-glutamine + H2O = L-glutamate + NH4(+). It participates in amino-acid biosynthesis; L-histidine biosynthesis; L-histidine from 5-phospho-alpha-D-ribose 1-diphosphate: step 5/9. Functionally, IGPS catalyzes the conversion of PRFAR and glutamine to IGP, AICAR and glutamate. The HisH subunit provides the glutamine amidotransferase activity that produces the ammonia necessary to HisF for the synthesis of IGP and AICAR. This Vibrio vulnificus (strain YJ016) protein is Imidazole glycerol phosphate synthase subunit HisH 2 (hisH2).